Here is a 188-residue protein sequence, read N- to C-terminus: NADH-quinone oxidoreductase subunit I (188 aa).

4Fe-4S ferredoxin-type domains lie at 44–74 (LNRYADGLEKCIGCELCAWACPADAIFVEGA) and 90–119 (RVYQINYLRCIGCGLCIEACPTRALTMTNE). Positions 54, 57, 60, 64, 99, 102, 105, and 109 each coordinate [4Fe-4S] cluster. The interval 144–188 (GMVDSPHPMAPGTTAEDYYRGTVTGGAAPASQDEPEADDTAGDRP) is disordered. Over residues 176–188 (DEPEADDTAGDRP) the composition is skewed to acidic residues.

It belongs to the complex I 23 kDa subunit family. As to quaternary structure, NDH-1 is composed of 14 different subunits. Subunits NuoA, H, J, K, L, M, N constitute the membrane sector of the complex. It depends on [4Fe-4S] cluster as a cofactor.

It localises to the cell membrane. It catalyses the reaction a quinone + NADH + 5 H(+)(in) = a quinol + NAD(+) + 4 H(+)(out). NDH-1 shuttles electrons from NADH, via FMN and iron-sulfur (Fe-S) centers, to quinones in the respiratory chain. The immediate electron acceptor for the enzyme in this species is believed to be ubiquinone. Couples the redox reaction to proton translocation (for every two electrons transferred, four hydrogen ions are translocated across the cytoplasmic membrane), and thus conserves the redox energy in a proton gradient. The polypeptide is NADH-quinone oxidoreductase subunit I (Rhodococcus opacus (strain B4)).